The chain runs to 296 residues: Nucleotide-binding protein MGAS2096_Spy0550 (296 aa).

13–20 (GMSGAGKT) is a binding site for ATP. 63–66 (DMRS) is a binding site for GTP.

This sequence belongs to the RapZ-like family.

In terms of biological role, displays ATPase and GTPase activities. The polypeptide is Nucleotide-binding protein MGAS2096_Spy0550 (Streptococcus pyogenes serotype M12 (strain MGAS2096)).